A 477-amino-acid chain; its full sequence is Cytochrome c-552 (477 aa).

The N-terminal stretch at methionine 1–serine 26 is a signal peptide. Residue histidine 94 participates in heme c binding. The heme site is built by cysteine 122, cysteine 125, and lysine 126. Heme c-binding residues include cysteine 160, cysteine 163, histidine 164, cysteine 209, cysteine 212, and histidine 213. Ca(2+) is bound by residues glutamate 215, tyrosine 216, lysine 261, and glutamine 263. Tyrosine 216 lines the substrate pocket. Histidine 264 is a binding site for substrate. The heme c site is built by histidine 275, cysteine 282, cysteine 285, histidine 286, histidine 301, cysteine 314, cysteine 317, histidine 318, and histidine 393.

The protein belongs to the cytochrome c-552 family. Ca(2+) serves as cofactor. Heme c is required as a cofactor.

It is found in the periplasm. It carries out the reaction 6 Fe(III)-[cytochrome c] + NH4(+) + 2 H2O = 6 Fe(II)-[cytochrome c] + nitrite + 8 H(+). Its pathway is nitrogen metabolism; nitrate reduction (assimilation). Its function is as follows. Catalyzes the reduction of nitrite to ammonia, consuming six electrons in the process. This chain is Cytochrome c-552, found in Pectobacterium carotovorum subsp. carotovorum (strain PC1).